The sequence spans 78 residues: Large ribosomal subunit protein bL28 (78 aa).

This sequence belongs to the bacterial ribosomal protein bL28 family.

The polypeptide is Large ribosomal subunit protein bL28 (Synechococcus sp. (strain ATCC 27144 / PCC 6301 / SAUG 1402/1) (Anacystis nidulans)).